The following is a 316-amino-acid chain: Homoserine kinase (316 aa).

It belongs to the pseudomonas-type ThrB family.

It carries out the reaction L-homoserine + ATP = O-phospho-L-homoserine + ADP + H(+). It participates in amino-acid biosynthesis; L-threonine biosynthesis; L-threonine from L-aspartate: step 4/5. The polypeptide is Homoserine kinase (Pseudomonas aeruginosa (strain LESB58)).